Consider the following 344-residue polypeptide: Alkyl hydroperoxide reductase Rv2159c (344 aa).

Residues 49–50 are important for interaction with PknI; that stretch reads AG. The active-site Cysteine sulfenic acid (-SOH) intermediate is the cysteine 84.

The protein belongs to the AhpD family. As to quaternary structure, interacts with the serine/threonine-protein kinase PknI. The PknI-Rv2159c interaction is mediated through phosphorylation independent physical interaction.

With respect to regulation, interaction with PknI increases the peroxidase activity by several folds. Functionally, involved in protection against oxidative stresses. May play a significant role in maintaining the cellular homeostasis during stress and virulence of M.tuberculosis. In vitro, catalyzes the decomposition of cumene hydroperoxide (CHP) to acetophenone. The polypeptide is Alkyl hydroperoxide reductase Rv2159c (Mycobacterium tuberculosis (strain ATCC 25618 / H37Rv)).